Reading from the N-terminus, the 198-residue chain is Probable nicotinate-nucleotide adenylyltransferase (198 aa).

This sequence belongs to the NadD family.

It catalyses the reaction nicotinate beta-D-ribonucleotide + ATP + H(+) = deamido-NAD(+) + diphosphate. It participates in cofactor biosynthesis; NAD(+) biosynthesis; deamido-NAD(+) from nicotinate D-ribonucleotide: step 1/1. Catalyzes the reversible adenylation of nicotinate mononucleotide (NaMN) to nicotinic acid adenine dinucleotide (NaAD). This is Probable nicotinate-nucleotide adenylyltransferase from Chlorobium limicola (strain DSM 245 / NBRC 103803 / 6330).